The chain runs to 301 residues: MDSTMTNYMGQENLPPALKLINDKSYQYSTHKHNIETSNDGTLHSYTIVLSREPLESPTSYNKYQKNVEPVQKENQKPKDLNKMTAGPHIAVKNSSGLVSQISSTTSSERKRRTLARPSSSSESDLKVGNIQQSNQYFTLPSVMKPSALSTEDPKKVIVQSNTSSSSMSDASSKKSLPTYTYLSGHTTGSARYVTMVNVKFLLLHCDVLQRRAQSMFTDEFPSDCRLEEVVINFHQLCCRQLLDQNFNPRLSYCIGELNYSDSKPVSANDMSKTLAQLATTQSIAQLSIIVDVTEKNMKLK.

2 disordered regions span residues 56–126 (ESPT…ESDL) and 149–173 (LSTE…DASS). Basic and acidic residues predominate over residues 71 to 82 (VQKENQKPKDLN). Residues 93 to 102 (KNSSGLVSQI) are compositionally biased toward polar residues. Positions 161–173 (SNTSSSSMSDASS) are enriched in low complexity.

This is an uncharacterized protein from Caenorhabditis elegans.